Reading from the N-terminus, the 412-residue chain is Argininosuccinate synthase (412 aa).

ATP-binding positions include 10 to 18 (AYSGGLDTS) and alanine 36. Residues tyrosine 87 and serine 92 each coordinate L-citrulline. Position 87 is a phosphotyrosine (tyrosine 87). Lysine 112 carries the N6-acetyllysine modification. Tyrosine 113 bears the Phosphotyrosine mark. ATP is bound at residue 115 to 123 (SHGATGKGN). L-aspartate contacts are provided by threonine 119, asparagine 123, and aspartate 124. An L-citrulline-binding site is contributed by asparagine 123. Arginine 127 is an L-citrulline binding site. Lysine 165 and lysine 176 each carry N6-acetyllysine; by CLOCK. Phosphoserine occurs at positions 177 and 180. The L-citrulline site is built by serine 180 and serine 189. Serine 219 is subject to Phosphoserine. Positions 270 and 282 each coordinate L-citrulline.

The protein belongs to the argininosuccinate synthase family. Type 1 subfamily. As to quaternary structure, homotetramer. Interacts with NMRAL1. Interacts with CLOCK; in a circadian manner. Forms tissue-specific complexes with ASL, SLC7A1, HSP90AA1 and nitric oxide synthase NOS1, NOS2 or NOS3; the complex regulates cell-autonomous L-arginine synthesis and citrulline recycling while channeling extracellular L-arginine to nitric oxide synthesis pathway. Acetylated by CLOCK in a circadian manner which negatively regulates its enzyme activity. Deacetylated by histone deacetylases. In terms of tissue distribution, widely expressed.

The protein resides in the cytoplasm. It localises to the cytosol. The catalysed reaction is L-citrulline + L-aspartate + ATP = 2-(N(omega)-L-arginino)succinate + AMP + diphosphate + H(+). Its pathway is amino-acid biosynthesis; L-arginine biosynthesis; L-arginine from L-ornithine and carbamoyl phosphate: step 2/3. The protein operates within nitrogen metabolism; urea cycle; (N(omega)-L-arginino)succinate from L-aspartate and L-citrulline: step 1/1. Its function is as follows. One of the enzymes of the urea cycle, the metabolic pathway transforming neurotoxic amonia produced by protein catabolism into inocuous urea in the liver of ureotelic animals. Catalyzes the formation of arginosuccinate from aspartate, citrulline and ATP and together with ASL it is responsible for the biosynthesis of arginine in most body tissues. This chain is Argininosuccinate synthase, found in Mus musculus (Mouse).